Consider the following 960-residue polypeptide: Dynamin-like GTPase OPA1, mitochondrial (960 aa).

Residues 1–87 constitute a mitochondrion transit peptide; that stretch reads MWRLRRAAVA…IKYGYQPRRN (87 aa). The Mitochondrial matrix segment spans residues 88 to 96; the sequence is FWPARLATR. Residues 97-113 form a helical membrane-spanning segment; that stretch reads LLKLRYLILGSAVGGGY. The Mitochondrial intermembrane segment spans residues 114–770; that stretch reads TAKKTFDQWK…NAIENMVGPD (657 aa). Residues 210–254 adopt a coiled-coil conformation; that stretch reads SDKEKIDQLQEELLHTQLKYQRILERLEKENKELRKLVLQKDDKG. The residue at position 228 (K228) is an N6-acetyllysine. The Dynamin-type G domain occupies 285–561; the sequence is QDHLPRVVVV…FWKMVRESVE (277 aa). Positions 295-302 are G1 motif; that stretch reads GDQSAGKT. GTP contacts are provided by S298, G300, K301, T302, S303, and G317. Residue T302 coordinates Mg(2+). A G2 motif region spans residues 321 to 324; the sequence is MMTR. Residues T323 and D398 each contribute to the Mg(2+) site. The tract at residues 398–401 is G3 motif; the sequence is DLPG. The segment at 467-470 is G4 motif; the sequence is TKVD. The GTP site is built by K468, D470, and T503. Residues 501-504 are G5 motif; that stretch reads VVTG. 2 stalk region regions span residues 589–836 and 874–928; these read DRNE…IKDT and CNDV…IKLL. The interval 736-856 is paddle region; it reads SDKQQWDAAI…KTALNHCNLC (121 aa). An intramembrane segment occupies 771–781; it reads WKKRWLYWKNR. Residues 782–960 are Mitochondrial intermembrane-facing; sequence TQEQCVHNET…AFIEALHQEK (179 aa). A disulfide bridge connects residues C856 and C874. The stretch at 895 to 960 forms a coiled coil; that stretch reads RQQLTNTEVR…AFIEALHQEK (66 aa).

Belongs to the TRAFAC class dynamin-like GTPase superfamily. Dynamin/Fzo/YdjA family. As to quaternary structure, oligomeric complex consisting of membrane-bound and soluble forms of OPA1. Interacts with RCC1L; RCC1L acts as a guanine nucleotide exchange factor (GEF) for OPA1 by exchanging bound GDP for free GTP. Interacts with CHCHD3 and IMMT; these interactions occur preferentially with soluble OPA1 forms. Interacts with PRELID1. In terms of processing, cleaved by OMA1 or YME1L downstream of the transmembrane region in response to different signals to generate soluble forms. Cleaved by OMA1 at position S1 following stress conditions, generating the short soluble form (Dynamin-like GTPase OPA1, short form; S-OPA1). AFG3L2 is involved in the regulation of OMA1-dependent processing of OPA1. PARL-dependent proteolytic processing releases an antiapoptotic soluble form not required for mitochondrial fusion.

It localises to the mitochondrion inner membrane. The protein resides in the mitochondrion intermembrane space. It carries out the reaction GTP + H2O = GDP + phosphate + H(+). Its activity is regulated as follows. Activated by guanine nucleotide exchange factor RCC1L. In terms of biological role, dynamin-related GTPase that is essential for normal mitochondrial morphology by mediating fusion of the mitochondrial inner membranes, regulating cristae morphology and maintaining respiratory chain function. Exists in two forms: the transmembrane, long form (Dynamin-like GTPase OPA1, long form; L-OPA1), which is tethered to the inner mitochondrial membrane, and the short soluble form (Dynamin-like GTPase OPA1, short form; S-OPA1), which results from proteolytic cleavage and localizes in the intermembrane space. Both forms (L-OPA1 and S-OPA1) cooperate to catalyze the fusion of the mitochondrial inner membrane. The equilibrium between L-OPA1 and S-OPA1 is essential: excess levels of S-OPA1, produced by cleavage by OMA1 following loss of mitochondrial membrane potential, lead to an impaired equilibrium between L-OPA1 and S-OPA1, inhibiting mitochondrial fusion. The balance between L-OPA1 and S-OPA1 also influences cristae shape and morphology. Involved in remodeling cristae and the release of cytochrome c during apoptosis. Proteolytic processing by PARL in response to intrinsic apoptotic signals may lead to disassembly of OPA1 oligomers and release of the caspase activator cytochrome C (CYCS) into the mitochondrial intermembrane space. Acts as a regulator of T-helper Th17 cells, which are characterized by cells with fused mitochondria with tight cristae, by mediating mitochondrial membrane remodeling: OPA1 is required for interleukin-17 (IL-17) production. Its role in mitochondrial morphology is required for mitochondrial genome maintenance. Functionally, constitutes the transmembrane long form (L-OPA1) that plays a central role in mitochondrial inner membrane fusion and cristae morphology. L-OPA1 and the soluble short form (S-OPA1) form higher-order helical assemblies that coordinate the fusion of mitochondrial inner membranes. Inner membrane-anchored L-OPA1 molecules initiate membrane remodeling by recruiting soluble S-OPA1 to rapidly polymerize into a flexible cylindrical scaffold encaging the mitochondrial inner membrane. Once at the membrane surface, the formation of S-OPA1 helices induce bilayer curvature. OPA1 dimerization through the paddle region, which inserts into cardiolipin-containing membrane, promotes GTP hydrolysis and the helical assembly of a flexible OPA1 lattice on the membrane, which drives membrane curvature and mitochondrial fusion. Plays a role in the maintenance and remodeling of mitochondrial cristae, some invaginations of the mitochondrial inner membrane that provide an increase in the surface area. Probably acts by forming helical filaments at the inside of inner membrane tubes with the shape and dimensions of crista junctions. The equilibrium between L-OPA1 and S-OPA1 influences cristae shape and morphology: increased L-OPA1 levels promote cristae stacking and elongated mitochondria, while increased S-OPA1 levels correlated with irregular cristae packing and round mitochondria shape. Constitutes the soluble short form (S-OPA1) generated by cleavage by OMA1, which plays a central role in mitochondrial inner membrane fusion and cristae morphology. The transmembrane long form (L-OPA1) and the S-OPA1 form higher-order helical assemblies that coordinate the fusion of mitochondrial inner membranes. Inner membrane-anchored L-OPA1 molecules initiate membrane remodeling by recruiting soluble S-OPA1 to rapidly polymerize into a flexible cylindrical scaffold encaging the mitochondrial inner membrane. Once at the membrane surface, the formation of S-OPA1 helices induce bilayer curvature. OPA1 dimerization through the paddle region, which inserts into cardiolipin-containing membrane, promotes GTP hydrolysis and the helical assembly of a flexible OPA1 lattice on the membrane, which drives membrane curvature and mitochondrial fusion. Excess levels of S-OPA1 produced by cleavage by OMA1 following stress conditions that induce loss of mitochondrial membrane potential, lead to an impaired equilibrium between L-OPA1 and S-OPA1, thereby inhibiting mitochondrial fusion. Involved in mitochondrial safeguard in response to transient mitochondrial membrane depolarization by mediating flickering: cleavage by OMA1 leads to excess production of S-OPA1, preventing mitochondrial hyperfusion. Plays a role in the maintenance and remodeling of mitochondrial cristae, some invaginations of the mitochondrial inner membrane that provide an increase in the surface area. Probably acts by forming helical filaments at the inside of inner membrane tubes with the shape and dimensions of crista junctions. The equilibrium between L-OPA1 and S-OPA1 influences cristae shape and morphology: increased L-OPA1 levels promote cristae stacking and elongated mitochondria, while increased S-OPA1 levels correlated with irregular cristae packing and round mitochondria shape. The chain is Dynamin-like GTPase OPA1, mitochondrial from Pongo abelii (Sumatran orangutan).